The sequence spans 246 residues: Homeobox protein Hox-B4a (246 aa).

Residues Tyr23–Arg125 form a disordered region. 2 stretches are compositionally biased toward polar residues: residues Ala39–His48 and Gln112–Ser123. The short motif at Val130–Lys135 is the Antp-type hexapeptide element. The segment at residues Pro151–His210 is a DNA-binding region (homeobox). The disordered stretch occupies residues His210 to Leu246. Polar residues predominate over residues Lys216–Ala239.

Belongs to the Antp homeobox family. Deformed subfamily.

Its subcellular location is the nucleus. Functionally, sequence-specific transcription factor which is part of a developmental regulatory system that provides cells with specific positional identities on the anterior-posterior axis. The polypeptide is Homeobox protein Hox-B4a (hoxb4a) (Danio rerio (Zebrafish)).